The chain runs to 721 residues: Protein mu-NS (721 aa).

Residues 1-13 are interaction with sigma-NS; that stretch reads MASFKGFSANTVP. The segment at 1–38 is RNA-binding; it reads MASFKGFSANTVPVSKAKRDISSLAATPGLRSQSFTPS. The interaction with mu-2 stretch occupies residues 14–40; it reads VSKAKRDISSLAATPGLRSQSFTPSVD. The interval 471 to 721 is involved in the formation of factory-like inclusions; the sequence is SNDVTDGIKL…IDFSVPTDEL (251 aa). Coiled coils occupy residues 522 to 559 and 628 to 684; these read PLLS…KSAQ and LMNG…ALNQ.

The protein belongs to the orthoreovirus mu-NS protein family. Interacts with mu-2. Interacts with sigma-NS; in viral factories. Interacts with the inner capsid proteins lambda-1 and sigma-2, and outer capsid protein lambda-2; in viral factories. The N-terminus is blocked.

The protein localises to the host cytoplasm. In terms of biological role, non-structural protein implicated with protein sigma-NS in forming the matrix of viral factories, which are large inclusions in the host cytoplasm where replication intermediates are assembled and viral RNA replication takes place. Together with mu-2, recruits the other core proteins to these factories. Binds RNA and recruits viral mRNAs to sites of viral replication. In Reovirus type 3 (strain Dearing) (T3D), this protein is Protein mu-NS (M3).